The sequence spans 394 residues: Elongation factor Tu (394 aa).

One can recognise a tr-type G domain in the interval 10–204 (KPHVNVGTIG…ALDTYIPEPE (195 aa)). The G1 stretch occupies residues 19–26 (GHVDHGKT). 19–26 (GHVDHGKT) lines the GTP pocket. T26 is a binding site for Mg(2+). The G2 stretch occupies residues 60-64 (GITIN). A G3 region spans residues 81–84 (DCPG). Residues 81–85 (DCPGH) and 136–139 (NKCD) each bind GTP. Residues 136–139 (NKCD) are G4. The G5 stretch occupies residues 174-176 (SAL).

This sequence belongs to the TRAFAC class translation factor GTPase superfamily. Classic translation factor GTPase family. EF-Tu/EF-1A subfamily. In terms of assembly, monomer.

The protein localises to the cytoplasm. The catalysed reaction is GTP + H2O = GDP + phosphate + H(+). In terms of biological role, GTP hydrolase that promotes the GTP-dependent binding of aminoacyl-tRNA to the A-site of ribosomes during protein biosynthesis. This chain is Elongation factor Tu, found in Shewanella pealeana (strain ATCC 700345 / ANG-SQ1).